The sequence spans 87 residues: Small ribosomal subunit protein bS16c (87 aa).

It belongs to the bacterial ribosomal protein bS16 family.

It is found in the plastid. The protein localises to the chloroplast. This chain is Small ribosomal subunit protein bS16c, found in Zygnema circumcarinatum (Green alga).